We begin with the raw amino-acid sequence, 293 residues long: NAD-dependent protein deacetylase (293 aa).

Residues 1 to 284 enclose the Deacetylase sirtuin-type domain; the sequence is MTVAITQTGP…QPPDPLHTAT (284 aa). Residues 27–47 and 105–108 each bind NAD(+); these read GAGC…GGWK and QNVD. Histidine 123 (proton acceptor) is an active-site residue. Zn(2+) is bound by residues cysteine 131, cysteine 134, cysteine 182, and cysteine 185. NAD(+) is bound by residues 222-224, 248-250, and cysteine 266; these read GSS and NFG.

This sequence belongs to the sirtuin family. Class II subfamily. Zn(2+) is required as a cofactor.

It localises to the cytoplasm. It carries out the reaction N(6)-acetyl-L-lysyl-[protein] + NAD(+) + H2O = 2''-O-acetyl-ADP-D-ribose + nicotinamide + L-lysyl-[protein]. Functionally, NAD-dependent protein deacetylase which modulates the activities of several enzymes which are inactive in their acetylated form. In Xanthomonas campestris pv. campestris (strain B100), this protein is NAD-dependent protein deacetylase.